Reading from the N-terminus, the 1338-residue chain is Vascular endothelial growth factor receptor 1 (1338 aa).

Residues 1 to 26 form the signal peptide; that stretch reads MVSYWDTGVLLCALLSCLLLTGSSSG. Topologically, residues 27–758 are extracellular; the sequence is SKLKDPELSL…QGTSDKSNLE (732 aa). 7 consecutive Ig-like C2-type domains span residues 32–123, 151–214, 230–327, 335–421, 428–553, 556–654, and 661–747; these read PELS…TESA, GREL…VNGH, IDVQ…TSVH, TVKH…LTAT, PQIY…FYIT, PNGF…KEIT, and PYLL…AYLT. Disulfide bonds link Cys-53–Cys-107 and Cys-158–Cys-207. N-linked (GlcNAc...) asparagine glycans are attached at residues Asn-100, Asn-164, Asn-196, and Asn-251. An intrachain disulfide couples Cys-252 to Cys-311. 9 N-linked (GlcNAc...) asparagine glycosylation sites follow: Asn-323, Asn-402, Asn-417, Asn-474, Asn-547, Asn-597, Asn-620, Asn-625, and Asn-666. A disulfide bridge links Cys-454 with Cys-535. Residues Cys-577 and Cys-636 are joined by a disulfide bond. Cys-682 and Cys-731 form a disulfide bridge. A helical membrane pass occupies residues 759–780; that stretch reads LITLTCTCVAATLFWLLLTLFI. Over 781–1338 the chain is Cytoplasmic; that stretch reads RKMKRSSSEI…SVVLYSTPPI (558 aa). Residues 827–1158 form the Protein kinase domain; the sequence is LKLGKSLGRG…ELVEKLGDLL (332 aa). Residues 833-841 and Lys-861 each bind ATP; that span reads LGRGAFGKV. Position 914 is a phosphotyrosine; by autocatalysis (Tyr-914). Residues 940 to 957 show a composition bias toward basic and acidic residues; sequence PKKEKMEPGLEQGKKPRL. A disordered region spans residues 940–982; it reads PKKEKMEPGLEQGKKPRLDSVTSSESFASSGFQEDKSLSDVEE. Polar residues predominate over residues 959–971; sequence SVTSSESFASSGF. The active-site Proton acceptor is the Asp-1022. A phosphotyrosine; by autocatalysis mark is found at Tyr-1053, Tyr-1169, Tyr-1213, Tyr-1242, Tyr-1309, Tyr-1327, and Tyr-1333.

The protein belongs to the protein kinase superfamily. Tyr protein kinase family. CSF-1/PDGF receptor subfamily. As to quaternary structure, interacts with VEGFA, VEGFB and PGF. Monomer in the absence of bound VEGFA, VEGFB or PGF. Homodimer in the presence of bound VEGFA, VEGFB and PGF. Can also form a heterodimer with KDR. Interacts (when tyrosine phosphorylated) with CBL, CRK, GRB2, NCK1, PIK3R1, PLCG, PSEN1 and PTPN11. Probably also interacts with PTPRB. Interacts with RACK1. Identified in a complex with CBL and CD2AP. N-glycosylated. In terms of processing, ubiquitinated after VEGFA-mediated autophosphorylation, leading to proteolytic degradation. Post-translationally, autophosphorylated on tyrosine residues upon ligand binding. Autophosphorylation occurs in trans, i.e. one subunit of the dimeric receptor phosphorylates tyrosine residues on the other subunit. Phosphorylation at Tyr-1169 is important for interaction with PLCG. Phosphorylation at Tyr-1213 is important for interaction with PIK3R1, PTPN11, GRB2, and PLCG. Phosphorylation at Tyr-1333 is important for endocytosis and for interaction with CBL, NCK1 and CRK. Is probably dephosphorylated by PTPRB. As to expression, detected in normal lung, but also in placenta, liver, kidney, heart and brain tissues. Specifically expressed in most of the vascular endothelial cells, and also expressed in peripheral blood monocytes. Isoform 2 is strongly expressed in placenta. Isoform 3 is expressed in corneal epithelial cells (at protein level). Isoform 3 is expressed in vascular smooth muscle cells (VSMC).

It localises to the cell membrane. The protein resides in the endosome. The protein localises to the secreted. Its subcellular location is the cytoplasm. It catalyses the reaction L-tyrosyl-[protein] + ATP = O-phospho-L-tyrosyl-[protein] + ADP + H(+). With respect to regulation, present in an inactive conformation in the absence of bound ligand. Binding of VEGFA, VEGFB or PGF leads to dimerization and activation by autophosphorylation on tyrosine residues. Functionally, tyrosine-protein kinase that acts as a cell-surface receptor for VEGFA, VEGFB and PGF, and plays an essential role in the development of embryonic vasculature, the regulation of angiogenesis, cell survival, cell migration, macrophage function, chemotaxis, and cancer cell invasion. Acts as a positive regulator of postnatal retinal hyaloid vessel regression. May play an essential role as a negative regulator of embryonic angiogenesis by inhibiting excessive proliferation of endothelial cells. Can promote endothelial cell proliferation, survival and angiogenesis in adulthood. Its function in promoting cell proliferation seems to be cell-type specific. Promotes PGF-mediated proliferation of endothelial cells, proliferation of some types of cancer cells, but does not promote proliferation of normal fibroblasts (in vitro). Has very high affinity for VEGFA and relatively low protein kinase activity; may function as a negative regulator of VEGFA signaling by limiting the amount of free VEGFA and preventing its binding to KDR. Modulates KDR signaling by forming heterodimers with KDR. Ligand binding leads to the activation of several signaling cascades. Activation of PLCG leads to the production of the cellular signaling molecules diacylglycerol and inositol 1,4,5-trisphosphate and the activation of protein kinase C. Mediates phosphorylation of PIK3R1, the regulatory subunit of phosphatidylinositol 3-kinase, leading to activation of phosphatidylinositol kinase and the downstream signaling pathway. Mediates activation of MAPK1/ERK2, MAPK3/ERK1 and the MAP kinase signaling pathway, as well as of the AKT1 signaling pathway. Phosphorylates SRC and YES1, and may also phosphorylate CBL. Promotes phosphorylation of AKT1 at 'Ser-473'. Promotes phosphorylation of PTK2/FAK1. Phosphorylates PLCG. In terms of biological role, may function as decoy receptor for VEGFA. Its function is as follows. Has a truncated kinase domain; it increases phosphorylation of SRC at 'Tyr-418' by unknown means and promotes tumor cell invasion. The chain is Vascular endothelial growth factor receptor 1 (FLT1) from Homo sapiens (Human).